A 245-amino-acid polypeptide reads, in one-letter code: MNKNIKYSQNFLTSEKVLNQIIKQLNLKETDTVYEIGTGKGHLTTKLAKISKQVTSIELDSHLFNLSSEKLKLNIRVTLIHQDILQFQFPNKQRYKIVGNIPYHLSTQIIKKVVFESHASDIYLIVEEGFYKRTLDIHRTLGLLLHTQVSIQQLLKLPAECFHPKPKVNSVLIKLTRHTTDVPDKYWKLYTYFVSKWVNREYRQLFTKNQFHQAMKHAKVNNLSTVTYEQVLSIFNSYLLFNGRK.

Asparagine 10, leucine 12, glycine 37, glutamate 58, aspartate 83, and asparagine 100 together coordinate S-adenosyl-L-methionine.

The protein belongs to the class I-like SAM-binding methyltransferase superfamily. rRNA adenine N(6)-methyltransferase family.

It catalyses the reaction adenosine(2085) in 23S rRNA + 2 S-adenosyl-L-methionine = N(6)-dimethyladenosine(2085) in 23S rRNA + 2 S-adenosyl-L-homocysteine + 2 H(+). In terms of biological role, this protein produces a dimethylation of the adenine residue at position 2085 in 23S rRNA, resulting in reduced affinity between ribosomes and macrolide-lincosamide-streptogramin B antibiotics. In Enterococcus faecalis (strain ATCC 700802 / V583), this protein is rRNA adenine N-6-methyltransferase (ermB).